We begin with the raw amino-acid sequence, 105 residues long: NADH-quinone oxidoreductase subunit K (105 aa).

The next 3 helical transmembrane spans lie at Leu8 to Leu28, Ile34 to Phe54, and Val65 to Leu85.

This sequence belongs to the complex I subunit 4L family. In terms of assembly, NDH-1 is composed of 14 different subunits. Subunits NuoA, H, J, K, L, M, N constitute the membrane sector of the complex.

The protein resides in the cell inner membrane. The enzyme catalyses a quinone + NADH + 5 H(+)(in) = a quinol + NAD(+) + 4 H(+)(out). In terms of biological role, NDH-1 shuttles electrons from NADH, via FMN and iron-sulfur (Fe-S) centers, to quinones in the respiratory chain. The immediate electron acceptor for the enzyme in this species is believed to be ubiquinone. Couples the redox reaction to proton translocation (for every two electrons transferred, four hydrogen ions are translocated across the cytoplasmic membrane), and thus conserves the redox energy in a proton gradient. In Acidithiobacillus ferrooxidans (strain ATCC 23270 / DSM 14882 / CIP 104768 / NCIMB 8455) (Ferrobacillus ferrooxidans (strain ATCC 23270)), this protein is NADH-quinone oxidoreductase subunit K.